Reading from the N-terminus, the 589-residue chain is Serine/threonine-protein kinase PknJ (589 aa).

Residues 1–342 (MAHELSAGSV…LPRRPRRYRR (342 aa)) lie on the Cytoplasmic side of the membrane. In terms of domain architecture, Protein kinase spans 14 to 276 (YRIERMLGAG…SAGEFAHAAA (263 aa)). ATP contacts are provided by residues 20-28 (LGAGGMGTV) and Lys43. The active-site Proton acceptor is Asp136. Residues 343-363 (GVAAVAAVMVVAAAAVTAVTM) form a helical membrane-spanning segment. Over 364–589 (TSHQPRTATP…TNYILAKIPG (226 aa)) the chain is Extracellular. A compositionally biased stretch (low complexity) spans 365 to 387 (SHQPRTATPPSAAALSPTSSSTT). The disordered stretch occupies residues 365–400 (SHQPRTATPPSAAALSPTSSSTTPPQPPIVTRSRLP).

It belongs to the protein kinase superfamily. Ser/Thr protein kinase family. As to quaternary structure, homodimer.

Its subcellular location is the cell membrane. It catalyses the reaction L-seryl-[protein] + ATP = O-phospho-L-seryl-[protein] + ADP + H(+). It carries out the reaction L-threonyl-[protein] + ATP = O-phospho-L-threonyl-[protein] + ADP + H(+). The chain is Serine/threonine-protein kinase PknJ (pknJ) from Mycobacterium bovis (strain ATCC BAA-935 / AF2122/97).